The chain runs to 381 residues: Homoserine O-succinyltransferase (381 aa).

The region spanning 45-360 is the AB hydrolase-1 domain; the sequence is NAVLVCHALN…PHGHDAFLLD (316 aa). The Nucleophile role is filled by S151. Position 221 (R221) interacts with substrate. Residues D321 and H354 contribute to the active site. D355 contributes to the substrate binding site.

The protein belongs to the AB hydrolase superfamily. MetX family. In terms of assembly, homodimer.

It is found in the cytoplasm. The catalysed reaction is L-homoserine + succinyl-CoA = O-succinyl-L-homoserine + CoA. The protein operates within amino-acid biosynthesis; L-methionine biosynthesis via de novo pathway; O-succinyl-L-homoserine from L-homoserine: step 1/1. Functionally, transfers a succinyl group from succinyl-CoA to L-homoserine, forming succinyl-L-homoserine. This is Homoserine O-succinyltransferase from Paraburkholderia phymatum (strain DSM 17167 / CIP 108236 / LMG 21445 / STM815) (Burkholderia phymatum).